A 397-amino-acid polypeptide reads, in one-letter code: Leucine carboxyl methyltransferase 1 (397 aa).

A disordered region spans residues 17 to 61 (AIQTPPPTDPNAAPAHRPAPRPALGRCRPPHRRRRRLRPPVRPPL). A compositionally biased stretch (low complexity) spans 26-43 (PNAAPAHRPAPRPALGRC). Residues 44–55 (RPPHRRRRRLRP) are compositionally biased toward basic residues. S-adenosyl-L-methionine-binding positions include arginine 119, glycine 142, aspartate 168, 224 to 225 (DL), and glutamate 259.

It belongs to the methyltransferase superfamily. LCMT family.

It catalyses the reaction [phosphatase 2A protein]-C-terminal L-leucine + S-adenosyl-L-methionine = [phosphatase 2A protein]-C-terminal L-leucine methyl ester + S-adenosyl-L-homocysteine. Its function is as follows. Methylates the carboxyl group of the C-terminal leucine residue of protein phosphatase 2A catalytic subunits to form alpha-leucine ester residues. The protein is Leucine carboxyl methyltransferase 1 (PPM1) of Cryptococcus neoformans var. neoformans serotype D (strain B-3501A) (Filobasidiella neoformans).